The following is a 644-amino-acid chain: Transcription factor cep-1 (644 aa).

Residues 223–418 mediate DNA binding; sequence EKWMEIDVLK…NFCEREDAKQ (196 aa). 4 residues coordinate Zn(2+): Cys-307, His-310, Cys-361, and Cys-365. The interval 528-555 is required for tertiary structure stability of the protein; it reads TNYSFRTLTLSTAEYTKVVEFLAREAKV.

This sequence belongs to the p53 family. As to quaternary structure, homodimer. Interacts (via C-terminus domain) with prmt-5; not methylated by prmt-5. Interacts with cbp-1 (via HAT domain); cep-1 transcriptional activity may be inhibited by interaction with methylated cbp-1. Component of a complex that contains prmt-5 and cbp-1. Interacts with ape-1; the interaction inhibits pro-apoptotic activity of cep-1. Zn(2+) serves as cofactor. Phosphorylated in response to IR-induced DNA damage which is thought to be mediated by akt-1. Expressed in pharyngeal muscle and neurons.

It is found in the nucleus. Its function is as follows. Transcriptional activator that binds the same DNA consensus sequence as p53. Has a role in normal development to ensure proper meiotic chromosome segregation. Promotes apoptosis under conditions of cellular and genotoxic stress in response to DNA damage, hypoxia, or starvation. Regulates germline apoptosis in response to DNA damage. Its pro-apoptotic activity is inhibited when bound to ape-1 in vitro. Plays a role in cell cycle arrest in the germline in response to DNA damage by UV-C light. However, not required for survival in response to DNA damage induced by UV-C light, indicating that it is unlikely to be involved in DNA repair. Required for induction of ced-13 in response to DNA damage. Regulates DNA damage-induced apoptosis by inducing transcription of the programmed cell death activator egl-1. Regulates germline proliferation by activating phg-1. Modulates lifespan. This Caenorhabditis elegans protein is Transcription factor cep-1.